A 103-amino-acid chain; its full sequence is Large ribosomal subunit protein bL21 (103 aa).

It belongs to the bacterial ribosomal protein bL21 family. As to quaternary structure, part of the 50S ribosomal subunit. Contacts protein L20.

Its function is as follows. This protein binds to 23S rRNA in the presence of protein L20. This chain is Large ribosomal subunit protein bL21, found in Clostridium perfringens (strain ATCC 13124 / DSM 756 / JCM 1290 / NCIMB 6125 / NCTC 8237 / Type A).